An 838-amino-acid chain; its full sequence is Transforming acidic coiled-coil-containing protein 3 (838 aa).

Ser2 is modified (N-acetylserine). Phosphoserine is present on residues Ser25, Ser39, and Ser71. Positions Glu123–Glu227 are disordered. Residues Ala132 to Ser164 are compositionally biased toward low complexity. A phosphoserine mark is found at Ser175 and Ser177. Residues Asp204–Glu227 are compositionally biased toward basic and acidic residues. Residues Ser250, Ser317, and Ser402 each carry the phosphoserine modification. The tract at residues Gly311–Asp527 is disordered. Residues Tyr403–Asp412 show a composition bias toward basic and acidic residues. A Phosphoserine modification is found at Ser434. Over residues Asn492 to Pro503 the composition is skewed to polar residues. The tract at residues Glu522–Val577 is necessary but not sufficient for spindle localization. The residue at position 558 (Ser558) is a Phosphoserine; by AURKA. Positions Asp569 to Arg594 are disordered. The segment covering Thr579–Pro591 has biased composition (polar residues). Residues Arg594–Ile838 are necessary but not sufficient for spindle localization. Residues Leu637–Lys837 are a coiled coil.

This sequence belongs to the TACC family. Interacts with microtubules. Interacts with CKAP5 independently of clathrin. Interacts with CKAP5 and clathrin forming the TACC3/ch-TOG/clathrin complex located at spindle inter-microtubules bridges; TACC3 (phosphorylated at Ser-558 by AURKA) and CLTC are proposed to form a composite microtubule interaction surface. Interacts with CCDC100/CEP120. The coiled coil C-terminal region interacts with AH receptor nuclear translocator protein (ARNT) and ARNT2. Interacts with GCN5L2 and PCAF.

It localises to the cytoplasm. The protein localises to the cytoskeleton. The protein resides in the microtubule organizing center. It is found in the centrosome. Its subcellular location is the spindle. It localises to the spindle pole. Its function is as follows. Plays a role in the microtubule-dependent coupling of the nucleus and the centrosome. Involved in the processes that regulate centrosome-mediated interkinetic nuclear migration (INM) of neural progenitors. Acts as a component of the TACC3/ch-TOG/clathrin complex proposed to contribute to stabilization of kinetochore fibers of the mitotic spindle by acting as inter-microtubule bridge. The TACC3/ch-TOG/clathrin complex is required for the maintenance of kinetochore fiber tension. May be involved in the control of cell growth and differentiation. May contribute to cancer. This Homo sapiens (Human) protein is Transforming acidic coiled-coil-containing protein 3 (TACC3).